Here is a 75-residue protein sequence, read N- to C-terminus: Large ribosomal subunit protein bL31 (75 aa).

The protein belongs to the bacterial ribosomal protein bL31 family. Type A subfamily. As to quaternary structure, part of the 50S ribosomal subunit.

In terms of biological role, binds the 23S rRNA. In Pelodictyon phaeoclathratiforme (strain DSM 5477 / BU-1), this protein is Large ribosomal subunit protein bL31.